Consider the following 304-residue polypeptide: tRNA uridine(34) hydroxylase (304 aa).

Residues 124-219 (QDEETLLIDT…YLETIPKEDS (96 aa)) form the Rhodanese domain. The active-site Cysteine persulfide intermediate is the Cys179.

Belongs to the TrhO family.

It carries out the reaction uridine(34) in tRNA + AH2 + O2 = 5-hydroxyuridine(34) in tRNA + A + H2O. Functionally, catalyzes oxygen-dependent 5-hydroxyuridine (ho5U) modification at position 34 in tRNAs. The polypeptide is tRNA uridine(34) hydroxylase (Bartonella henselae (strain ATCC 49882 / DSM 28221 / CCUG 30454 / Houston 1) (Rochalimaea henselae)).